A 241-amino-acid polypeptide reads, in one-letter code: Agamous-like MADS-box protein AGL9 homolog (241 aa).

One can recognise an MADS-box domain in the interval 3-57; it reads RGRVELKRIENKINRQVTFAKRRNGLLKKAYELSVLCDAEVALIIFSNRGKLYEF. The 91-residue stretch at 89–179 folds into the K-box domain; it reads EISSQQEYLK…KQRLMEGSTL (91 aa).

The protein resides in the nucleus. Its function is as follows. Probable transcription factor. The polypeptide is Agamous-like MADS-box protein AGL9 homolog (FBP2) (Petunia hybrida (Petunia)).